Consider the following 166-residue polypeptide: Lithostathine-1-alpha (166 aa).

Positions 1-22 (MAQTSSYFMLISCLMFLSQSQG) are cleaved as a signal peptide. Gln-23 is subject to Pyrrolidone carboxylic acid. O-linked (GalNAc) threonine glycosylation is present at Thr-27. The 131-residue stretch at 34 to 164 (ISCPEGTNAY…EDKFSFVCKF (131 aa)) folds into the C-type lectin domain. 3 cysteine pairs are disulfide-bonded: Cys-36/Cys-47, Cys-64/Cys-162, and Cys-137/Cys-154.

Post-translationally, the composition of the O-linked carbohydrate on Thr-27 is complex and varied. In the crystallographic structure, the attached sugar appears to be N-acetylglucosamine, typical of an intracellular protein, rather than N-acetylgalactosamine. In terms of tissue distribution, in pancreatic acinar cells and, in lower levels, in brain. Enhanced expression of PSP-related transcripts and intraneuronal accumulation of PSP-like proteins is found in brain from Alzheimer disease and Down syndrome patients.

The protein resides in the secreted. Functionally, might act as an inhibitor of spontaneous calcium carbonate precipitation. May be associated with neuronal sprouting in brain, and with brain and pancreas regeneration. The protein is Lithostathine-1-alpha (REG1A) of Homo sapiens (Human).